The primary structure comprises 60 residues: Cytotoxin 5 (60 aa).

Cystine bridges form between Cys3–Cys21, Cys14–Cys38, Cys42–Cys53, and Cys54–Cys59.

This sequence belongs to the three-finger toxin family. Short-chain subfamily. Type IA cytotoxin sub-subfamily. In terms of assembly, monomer in solution; Homodimer and oligomer in the presence of negatively charged lipids forming a pore with a size ranging between 20 and 30 Angstroms. As to expression, expressed by the venom gland.

The protein localises to the secreted. It localises to the target cell membrane. In terms of biological role, shows cytolytic activity on many different cells by forming pore in lipid membranes. In vivo, increases heart rate or kills the animal by cardiac arrest. In addition, it binds to heparin with high affinity, interacts with Kv channel-interacting protein 1 (KCNIP1) in a calcium-independent manner, and binds to integrin alpha-V/beta-3 (ITGAV/ITGB3) with moderate affinity. This chain is Cytotoxin 5, found in Naja haje haje (Egyptian cobra).